The following is a 117-amino-acid chain: MYWSLTACSAVLFCLRDSLIFLADDVNPERGNEGVAVGTGGIPGRGIPPLITANGIGLYTFTSIGLLVPFTLGLKTQNQQIKIVVKSKISETNKLVIFCCLKHIISRKARSWLNDSR.

It localises to the plastid. It is found in the chloroplast. This is an uncharacterized protein from Chlamydomonas reinhardtii (Chlamydomonas smithii).